The primary structure comprises 294 residues: MNFILFIFIPGVFSLKSSTLKPTIEALPNVLPLNEDVNKQEEKNEDHTPNYAPANEKNGNYYKDIKQYVFTTQNPNGTESEISVRATTDLNFALKNDKTVNATTYEKSTIEEETTTSEPSHKNIQRSTPNVPAFWTMLAKAINGTAVVMDDKDQLFHPIPESDVNATQGENQPDLEDLKIKIMLGISLMTLLLFVVLLAFCSATLYKLRHLSYKSCESQYSVNPELATMSYFHPSEGVSDTSFSKSAESSTFLGTTSSDMRRSGTRTSESKIMTDIISIGSDNEMHENDESVTR.

The N-terminal stretch at 1-14 is a signal peptide; the sequence is MNFILFIFIPGVFS. Topologically, residues 15–181 are vesicular; the sequence is LKSSTLKPTI…QPDLEDLKIK (167 aa). N-linked (GlcNAc...) asparagine glycosylation is present at N76. A disordered region spans residues 107–126; sequence KSTIEEETTTSEPSHKNIQR. A glycan (N-linked (GlcNAc...) asparagine) is linked at N143. Residues 182 to 202 form a helical membrane-spanning segment; it reads IMLGISLMTLLLFVVLLAFCS. The Cytoplasmic segment spans residues 203-294; the sequence is ATLYKLRHLS…MHENDESVTR (92 aa).

In terms of assembly, interacts with SNAP25. Post-translationally, highly N- and O-glycosylated; contains sialic acid. As to expression, isoform 1 is highly expressed in testis. Isoform 2 is expressed at low levels in skin and blood.

The protein resides in the cytoplasmic vesicle. It localises to the secretory vesicle. Its subcellular location is the acrosome membrane. The protein localises to the acrosome inner membrane. It is found in the acrosome outer membrane. Acrosomal membrane-anchored protein involved in the process of fertilization and in acrosome biogenesis. The sequence is that of Equatorin (EQTN) from Homo sapiens (Human).